Consider the following 618-residue polypeptide: MTASRLLETINSPADLRRLDRKQLPQLASELRAFLIDSVSKTGGHLSSNLGTVELTIALHAVFNTPEDRLVWDVGHQCYAHKVLTGRREGMSTLRMHGGVSGFPKRAESPYDTFGVGHSSTSISAALGMALAAKHKGEDRKAIAIIGDGAMSAGMAFEAMNNAGVADADMLVILNDNEMSISPPVGALNNILTRLTSSKTYNVAREAGRHMLGFAPPLLELARRAEEHVKGMIAPGTLFEEFGFHYYGPIDGHDLDALIPTLENLKKLKGPKFLHVITKKGQGYKLAENDPILYHGVGKFAACDGIQSAKGPAKLTYTQVFGDWLCDMAKADSRLVGITPAMREGSGMVRFSAEHADRYFDVGIAEQHAVTFAAGLACEGLKPVVAIYSTFLQRGYDQLVHDVALQNLPVIFAVDRGGLVGADGPTHHGTFDLSFVTCIPNMTVMAPADEAECRKMLSTAMTIDGPSMVRYPRGSGTGTIPEAKLDTLPVGKGDIRRRGKDIALLAFGSLVAAAVAAGEELDATVANMRFIKPLDADLIVELAGNHSLLVSIEENAVIGGAGSEIERVLAERGLQVPVLRLGLPDRFIDHGEQGQLLAELGLDKEGIVRAVRARTNPQ.

Residues His-76 and 117–119 (GHS) contribute to the thiamine diphosphate site. Asp-148 provides a ligand contact to Mg(2+). Residues 149–150 (GA), Asn-177, Tyr-284, and Glu-366 contribute to the thiamine diphosphate site. Mg(2+) is bound at residue Asn-177.

The protein belongs to the transketolase family. DXPS subfamily. Homodimer. It depends on Mg(2+) as a cofactor. Thiamine diphosphate serves as cofactor.

It carries out the reaction D-glyceraldehyde 3-phosphate + pyruvate + H(+) = 1-deoxy-D-xylulose 5-phosphate + CO2. It participates in metabolic intermediate biosynthesis; 1-deoxy-D-xylulose 5-phosphate biosynthesis; 1-deoxy-D-xylulose 5-phosphate from D-glyceraldehyde 3-phosphate and pyruvate: step 1/1. Functionally, catalyzes the acyloin condensation reaction between C atoms 2 and 3 of pyruvate and glyceraldehyde 3-phosphate to yield 1-deoxy-D-xylulose-5-phosphate (DXP). This is 1-deoxy-D-xylulose-5-phosphate synthase from Dechloromonas aromatica (strain RCB).